The following is a 122-amino-acid chain: NADH-quinone oxidoreductase subunit A (122 aa).

A run of 3 helical transmembrane segments spans residues 12 to 32 (ILLFILVGLAIGVLSMLAGWL), 67 to 87 (IAILFILFDLEIAFLFPWAVV), and 91 to 111 (IGWFGFVAMLVFLGLLVVGFI).

It belongs to the complex I subunit 3 family. NDH-1 is composed of 14 different subunits. Subunits NuoA, H, J, K, L, M, N constitute the membrane sector of the complex.

The protein resides in the cell inner membrane. The enzyme catalyses a quinone + NADH + 5 H(+)(in) = a quinol + NAD(+) + 4 H(+)(out). In terms of biological role, NDH-1 shuttles electrons from NADH, via FMN and iron-sulfur (Fe-S) centers, to quinones in the respiratory chain. The immediate electron acceptor for the enzyme in this species is believed to be ubiquinone. Couples the redox reaction to proton translocation (for every two electrons transferred, four hydrogen ions are translocated across the cytoplasmic membrane), and thus conserves the redox energy in a proton gradient. The polypeptide is NADH-quinone oxidoreductase subunit A (Nitrosomonas europaea (strain ATCC 19718 / CIP 103999 / KCTC 2705 / NBRC 14298)).